The sequence spans 278 residues: Urease accessory protein UreD 3 (278 aa).

Belongs to the UreD family. UreD, UreF and UreG form a complex that acts as a GTP-hydrolysis-dependent molecular chaperone, activating the urease apoprotein by helping to assemble the nickel containing metallocenter of UreC. The UreE protein probably delivers the nickel.

The protein resides in the cytoplasm. In terms of biological role, required for maturation of urease via the functional incorporation of the urease nickel metallocenter. The sequence is that of Urease accessory protein UreD 3 from Bradyrhizobium sp. (strain BTAi1 / ATCC BAA-1182).